Consider the following 205-residue polypeptide: Ribosomal RNA small subunit methyltransferase G 1 (205 aa).

Residues Gly77, Leu82, 100 to 102 (EKS), 129 to 130 (LE), and Arg138 contribute to the S-adenosyl-L-methionine site.

It belongs to the methyltransferase superfamily. RNA methyltransferase RsmG family.

The protein localises to the cytoplasm. It catalyses the reaction guanosine(527) in 16S rRNA + S-adenosyl-L-methionine = N(7)-methylguanosine(527) in 16S rRNA + S-adenosyl-L-homocysteine. Specifically methylates the N7 position of guanine in position 527 of 16S rRNA. The protein is Ribosomal RNA small subunit methyltransferase G 1 of Bdellovibrio bacteriovorus (strain ATCC 15356 / DSM 50701 / NCIMB 9529 / HD100).